We begin with the raw amino-acid sequence, 696 residues long: Translation factor waclaw, mitochondrial (696 aa).

Residues 1 to 76 (MIVGYSVFFH…RNLSTTNQVK (76 aa)) constitute a mitochondrion transit peptide. Residues 97–278 (ERIRNFSIIA…RVIETVPPPQ (182 aa)) form the tr-type G domain. Residues 106–113 (AHVDHGKS), 171–175 (DTPGH), and 225–228 (NKID) each bind GTP.

The protein belongs to the TRAFAC class translation factor GTPase superfamily. Classic translation factor GTPase family. LepA subfamily.

It localises to the mitochondrion inner membrane. The catalysed reaction is GTP + H2O = GDP + phosphate + H(+). Its function is as follows. Promotes mitochondrial protein synthesis. May act as a fidelity factor of the translation reaction, by catalyzing a one-codon backward translocation of tRNAs on improperly translocated ribosomes. Binds to mitochondrial ribosomes in a GTP-dependent manner. This chain is Translation factor waclaw, mitochondrial, found in Drosophila melanogaster (Fruit fly).